Here is a 366-residue protein sequence, read N- to C-terminus: ATP-dependent 6-phosphofructokinase 2 (366 aa).

Residues glycine 15, 78 to 79 (KD), and 119 to 122 (GDGT) each bind ATP. Aspartate 120 is a binding site for Mg(2+). Substrate contacts are provided by residues 142-144 (TID), arginine 179, 186-188 (MGR), glutamate 239, arginine 284, and 290-293 (HIQR). Residue aspartate 144 is the Proton acceptor of the active site.

The protein belongs to the phosphofructokinase type A (PFKA) family. Mixed-substrate PFK group III subfamily. In terms of assembly, homodimer or homotetramer. Requires Mg(2+) as cofactor.

It is found in the cytoplasm. The catalysed reaction is beta-D-fructose 6-phosphate + ATP = beta-D-fructose 1,6-bisphosphate + ADP + H(+). It participates in carbohydrate degradation; glycolysis; D-glyceraldehyde 3-phosphate and glycerone phosphate from D-glucose: step 3/4. Subject to allosteric activation by ADP and other diphosphonucleosides, and inhibition by phosphoenolpyruvate. Functionally, catalyzes the phosphorylation of D-fructose 6-phosphate to fructose 1,6-bisphosphate by ATP, the first committing step of glycolysis. The protein is ATP-dependent 6-phosphofructokinase 2 of Clostridium perfringens (strain 13 / Type A).